Reading from the N-terminus, the 487-residue chain is Chromosomal replication initiator protein DnaA (487 aa).

Residues 1–71 (MMHDALFERF…TSLVQSEDPD (71 aa)) are domain I, interacts with DnaA modulators. Positions 71-141 (DVLKVEILVR…QGGSGPLFGS (71 aa)) are domain II. The domain III, AAA+ region stretch occupies residues 142-364 (PLDTRFTFDT…GAFNQLMFRR (223 aa)). Residues Gly-188, Gly-190, Lys-191, and Thr-192 each contribute to the ATP site. The domain IV, binds dsDNA stretch occupies residues 365–487 (SFEPNLSVDR…LKRLINENNA (123 aa)).

It belongs to the DnaA family. As to quaternary structure, oligomerizes as a right-handed, spiral filament on DNA at oriC.

The protein localises to the cytoplasm. Its function is as follows. Plays an essential role in the initiation and regulation of chromosomal replication. ATP-DnaA binds to the origin of replication (oriC) to initiate formation of the DNA replication initiation complex once per cell cycle. Binds the DnaA box (a 9 base pair repeat at the origin) and separates the double-stranded (ds)DNA. Forms a right-handed helical filament on oriC DNA; dsDNA binds to the exterior of the filament while single-stranded (ss)DNA is stabiized in the filament's interior. The ATP-DnaA-oriC complex binds and stabilizes one strand of the AT-rich DNA unwinding element (DUE), permitting loading of DNA polymerase. After initiation quickly degrades to an ADP-DnaA complex that is not apt for DNA replication. Binds acidic phospholipids. In Agrobacterium fabrum (strain C58 / ATCC 33970) (Agrobacterium tumefaciens (strain C58)), this protein is Chromosomal replication initiator protein DnaA.